The sequence spans 118 residues: Large ribosomal subunit protein bL19 (118 aa).

Belongs to the bacterial ribosomal protein bL19 family.

In terms of biological role, this protein is located at the 30S-50S ribosomal subunit interface and may play a role in the structure and function of the aminoacyl-tRNA binding site. The protein is Large ribosomal subunit protein bL19 of Helicobacter pylori (strain HPAG1).